The chain runs to 236 residues: MSAPDLKRAAAERAIPLVEDGMRLGIGTGSTAAAFIALLGERVRAGLTVTGVPTSEATRIACEREGIPLATLEELPELDLTIDGADEVDGNLRLIKGGGAALLREKIVAAASRRMVVIADASKRVETLGAFPLPVEVNLFGIGATTRAVEAAVAAAGCIGEIVRRLDKAGQPVLTDGGHALLDLRLGRIPDPEALSARLWAVPGVVEHGLFLGIADAAILAAAEGDQAVVSVLGRL.

Residues 28–31, 83–86, and 96–99 each bind substrate; these read TGST, DGAD, and KGGG. Catalysis depends on E105, which acts as the Proton acceptor. Residue K123 coordinates substrate.

It belongs to the ribose 5-phosphate isomerase family. As to quaternary structure, homodimer.

The enzyme catalyses aldehydo-D-ribose 5-phosphate = D-ribulose 5-phosphate. The protein operates within carbohydrate degradation; pentose phosphate pathway; D-ribose 5-phosphate from D-ribulose 5-phosphate (non-oxidative stage): step 1/1. Its function is as follows. Catalyzes the reversible conversion of ribose-5-phosphate to ribulose 5-phosphate. This is Ribose-5-phosphate isomerase A from Methylorubrum populi (strain ATCC BAA-705 / NCIMB 13946 / BJ001) (Methylobacterium populi).